The chain runs to 344 residues: Nuclear distribution protein nudE-like 1-B (344 aa).

Positions 26–189 (YKKSCHDAQE…ELAVRERTSD (164 aa)) form a coiled coil.

The protein belongs to the nudE family. In terms of processing, phosphorylated in mitosis.

Its subcellular location is the cytoplasm. The protein localises to the cytoskeleton. It localises to the microtubule organizing center. It is found in the centrosome. The protein resides in the spindle. Functionally, required for organization of the cellular microtubule array and microtubule anchoring at the centrosome. Positively regulates the activity of the minus-end directed microtubule motor protein dynein. May enhance dynein-mediated microtubule sliding by targeting dynein to the microtubule plus end. This Danio rerio (Zebrafish) protein is Nuclear distribution protein nudE-like 1-B (ndel1b).